A 170-amino-acid chain; its full sequence is Adenine phosphoribosyltransferase (170 aa).

The protein belongs to the purine/pyrimidine phosphoribosyltransferase family. Homodimer.

It localises to the cytoplasm. The enzyme catalyses AMP + diphosphate = 5-phospho-alpha-D-ribose 1-diphosphate + adenine. The protein operates within purine metabolism; AMP biosynthesis via salvage pathway; AMP from adenine: step 1/1. Functionally, catalyzes a salvage reaction resulting in the formation of AMP, that is energically less costly than de novo synthesis. The protein is Adenine phosphoribosyltransferase of Lactococcus lactis subsp. lactis (strain IL1403) (Streptococcus lactis).